The following is a 99-amino-acid chain: uncharacterized protein (99 aa).

This is an uncharacterized protein from Acidianus bottle-shaped virus (isolate Italy/Pozzuoli) (ABV).